The sequence spans 299 residues: Acetylglutamate kinase (299 aa).

Substrate-binding positions include 70 to 71 (GG), R92, and N186.

Belongs to the acetylglutamate kinase family. ArgB subfamily.

Its subcellular location is the cytoplasm. It catalyses the reaction N-acetyl-L-glutamate + ATP = N-acetyl-L-glutamyl 5-phosphate + ADP. It functions in the pathway amino-acid biosynthesis; L-arginine biosynthesis; N(2)-acetyl-L-ornithine from L-glutamate: step 2/4. Functionally, catalyzes the ATP-dependent phosphorylation of N-acetyl-L-glutamate. This chain is Acetylglutamate kinase, found in Thermoanaerobacter sp. (strain X514).